The primary structure comprises 107 residues: Small ribosomal subunit protein uS10 (107 aa).

Belongs to the universal ribosomal protein uS10 family. As to quaternary structure, part of the 30S ribosomal subunit.

Its function is as follows. Involved in the binding of tRNA to the ribosomes. In Deinococcus geothermalis (strain DSM 11300 / CIP 105573 / AG-3a), this protein is Small ribosomal subunit protein uS10.